We begin with the raw amino-acid sequence, 787 residues long: Integrin beta-6 (787 aa).

The N-terminal stretch at 1 to 21 (MGIELLCLFFLFLGRNDHVQG) is a signal peptide. The region spanning 22–71 (GCAMGGAETCEDCLLIGPQCAWCSQENFTHLSGVGERCDTPANLLAKGCQ) is the PSI domain. At 22–708 (GCAMGGAETC…KDCPKPPNIP (687 aa)) the chain is on the extracellular side. 19 disulfide bridges follow: cysteine 23–cysteine 41, cysteine 31–cysteine 454, cysteine 34–cysteine 59, cysteine 44–cysteine 70, cysteine 197–cysteine 204, cysteine 252–cysteine 293, cysteine 394–cysteine 406, cysteine 426–cysteine 452, cysteine 456–cysteine 476, cysteine 467–cysteine 479, cysteine 481–cysteine 490, cysteine 492–cysteine 519, cysteine 502–cysteine 517, cysteine 511–cysteine 522, cysteine 524–cysteine 537, cysteine 539–cysteine 560, cysteine 544–cysteine 558, cysteine 552–cysteine 563, and cysteine 565–cysteine 574. N-linked (GlcNAc...) asparagine glycosylation is found at asparagine 48 and asparagine 97. The VWFA domain maps to 131-371 (YPVDLYYLMD…QLIISAYEEL (241 aa)). Mg(2+)-binding residues include aspartate 140, serine 142, and serine 144. Ca(2+)-binding residues include serine 144, aspartate 147, aspartate 148, and glutamate 179. Ca(2+)-binding residues include asparagine 235, aspartate 237, proline 239, and glutamate 240. A Mg(2+)-binding site is contributed by glutamate 240. The N-linked (GlcNAc...) asparagine glycan is linked to asparagine 260. 2 residues coordinate Ca(2+): aspartate 271 and lysine 355. Asparagine 387 carries N-linked (GlcNAc...) asparagine glycosylation. The N-linked (GlcNAc...) asparagine glycan is linked to asparagine 418. I-EGF domains are found at residues 456–491 (CQKE…HHCE), 492–538 (CGED…PYCQ), 539–575 (CDNF…EYCN), and 576–615 (CTTS…PACE). N-linked (GlcNAc...) asparagine glycans are attached at residues asparagine 463 and asparagine 471. N-linked (GlcNAc...) asparagine glycosylation occurs at asparagine 541. Residue asparagine 575 is glycosylated (N-linked (GlcNAc...) asparagine). Disulfide bonds link cysteine 576–cysteine 599, cysteine 583–cysteine 597, cysteine 591–cysteine 602, cysteine 604–cysteine 614, cysteine 617–cysteine 620, cysteine 624–cysteine 670, cysteine 630–cysteine 649, cysteine 633–cysteine 645, and cysteine 678–cysteine 701. The chain crosses the membrane as a helical span at residues 709 to 729 (MIMLGVSLAILLIGVALLCIW). Residues 730–757 (KLLVSFHDRKEVAKFEAERSKAKWQTGT) are interaction with HAX1. Residues 730–787 (KLLVSFHDRKEVAKFEAERSKAKWQTGTNPLYRGSTSTFKNVTYKHKEKQKVDLSTDG) lie on the Cytoplasmic side of the membrane.

It belongs to the integrin beta chain family. As to quaternary structure, heterodimer of an alpha and a beta subunit. Interacts with FLNB. Interacts with HAX1. ITGAV:ITGB6 interacts with FBN1. ITGAV:ITGB6 interacts with TGFB1.

It is found in the cell membrane. The protein localises to the cell junction. It localises to the focal adhesion. In terms of biological role, integrin alpha-V:beta-6 (ITGAV:ITGB6) is a receptor for fibronectin and cytotactin. It recognizes the sequence R-G-D in its ligands. ITGAV:ITGB6 acts as a receptor for fibrillin-1 (FBN1) and mediates R-G-D-dependent cell adhesion to FBN1. Integrin alpha-V:beta-6 (ITGAV:ITGB6) mediates R-G-D-dependent release of transforming growth factor beta-1 (TGF-beta-1) from regulatory Latency-associated peptide (LAP), thereby playing a key role in TGF-beta-1 activation. This Ovis aries (Sheep) protein is Integrin beta-6 (ITGB6).